The sequence spans 342 residues: Biotin synthase (342 aa).

The region spanning 63–290 (NTVQLSTLLS…GAMVRLSAGR (228 aa)) is the Radical SAM core domain. [4Fe-4S] cluster-binding residues include C78, C82, and C85. [2Fe-2S] cluster-binding residues include C122, C153, C213, and R285.

Belongs to the radical SAM superfamily. Biotin synthase family. Homodimer. The cofactor is [4Fe-4S] cluster. [2Fe-2S] cluster serves as cofactor.

The enzyme catalyses (4R,5S)-dethiobiotin + (sulfur carrier)-SH + 2 reduced [2Fe-2S]-[ferredoxin] + 2 S-adenosyl-L-methionine = (sulfur carrier)-H + biotin + 2 5'-deoxyadenosine + 2 L-methionine + 2 oxidized [2Fe-2S]-[ferredoxin]. The protein operates within cofactor biosynthesis; biotin biosynthesis; biotin from 7,8-diaminononanoate: step 2/2. Catalyzes the conversion of dethiobiotin (DTB) to biotin by the insertion of a sulfur atom into dethiobiotin via a radical-based mechanism. The chain is Biotin synthase from Cupriavidus pinatubonensis (strain JMP 134 / LMG 1197) (Cupriavidus necator (strain JMP 134)).